Reading from the N-terminus, the 364-residue chain is GDP-fucose transporter 1 (364 aa).

A run of 8 helical transmembrane segments spans residues 34–56, 76–98, 111–130, 140–162, 167–185, 195–214, 227–249, and 264–286; these read FLLR…ISMV, VTFY…AACC, LRVA…MITF, VAFY…YLLL, SFYA…WLGV, SWLG…LNAI, IWRL…LLLL, and AHFW…VTGL.

It belongs to the TPT transporter family. SLC35C subfamily.

It localises to the golgi apparatus membrane. It catalyses the reaction GMP(out) + GDP-beta-L-fucose(in) = GMP(in) + GDP-beta-L-fucose(out). Its function is as follows. Antiporter specific for GDP-l-fucose and depending on the concomitant reverse transport of GMP. Involved in GDP-fucose import from the cytoplasm into the Golgi lumen. The polypeptide is GDP-fucose transporter 1 (Homo sapiens (Human)).